Here is an 816-residue protein sequence, read N- to C-terminus: Nitrogen permease regulator 3 (816 aa).

The signal sequence occupies residues 1-23 (MSSIARPPDPCLVAVVLIARSRA). 4 disordered regions span residues 26 to 166 (RFVF…VPWE), 213 to 249 (WRKQ…GNDA), 262 to 287 (ALHP…PLDA), and 632 to 684 (SKGK…NRFR). Over residues 44 to 56 (PKARRTSRSRSRQ) the composition is skewed to basic residues. Low complexity predominate over residues 82-95 (SQNLNNSNNSNNNS). Residues 101-127 (RRSSNFGLDDSNTLSENQRPGSISSSR) show a composition bias toward polar residues. The span at 148 to 159 (DRQEDGSRESDG) shows a compositional bias: basic and acidic residues. Residues 214-224 (RKQRRKKKKKQ) show a composition bias toward basic residues. A compositionally biased stretch (basic and acidic residues) spans 225–238 (RAEWESGELGHNDA). The span at 268 to 282 (QRPSVPNSRSSQMSS) shows a compositional bias: polar residues. Positions 641–654 (SDKEDSVNDERTEG) are enriched in basic and acidic residues. Over residues 660-676 (ASSSSSSSLASHGSGDA) the composition is skewed to low complexity.

It belongs to the NPR3 family.

Functionally, mediates inactivation of the TORC1 complex in response to amino acid starvation. Required for meiotic nuclear division. This Emericella nidulans (strain FGSC A4 / ATCC 38163 / CBS 112.46 / NRRL 194 / M139) (Aspergillus nidulans) protein is Nitrogen permease regulator 3 (npr3).